Reading from the N-terminus, the 338-residue chain is Trans-enoyl reductase fsr4 (338 aa).

65–68 (KDWK) contacts NADP(+). Substrate is bound at residue 147-153 (AAFTAAC). NADP(+)-binding positions include 182–185 (SSAV), 205–208 (AGRA), Tyr-227, and 277–278 (II).

Belongs to the zinc-containing alcohol dehydrogenase family.

Its function is as follows. Trans-enoyl reductase; part of the gene cluster that mediates the biosynthesis of fusarubins, highly pigmented naphthoquinones responsible for the coloration of the fruiting bodies. The non-reducing polyketide synthase FSR1 is responsible for the condensation of seven acetyl-CoA units to yield a haptaketide. After rings A and B are formed by aldol-type cyclization, the PKS-derived product is released as 6-O-demethylfusarubinaldehyde. Then, two hydroxyl groups at C-5 and C-10 are incorporated by FSR3, and simultaneously hydroxyl groups at C-6 and C-8 are methylated by FSR2. The aldehyde is, on the one hand, reduced by FSR3 to 8-O-methylfusarubin alcohol, which equilibrates mainly with 8-O-methylfusarubin and only small amounts of 8-O-methylnectriafurone. On the other hand, the aldehyde can be oxidized to form 8-O-methylfusarubinic acid, a reaction driven by FSR3 equilibrating with 8-O-methylfusarubinlactone, finally resulting in 8-O-methylanhydrofusarubinlactol after a further reduction step and loss of water. 8-O-Methylfusarubinic acid can also undergo decarboxylation, resulting in 8-O-methyl-13-hydroxynorjavanicin after another hydroxylation step at C-13. Both steps are most likely also accomplished by FSR3. No enzymatic function has been determined so far for either FSR4 and FSR5. Their deletion does not alter the product spectrum, but the possibility that they catalyze specific enzymatic steps during perithecium development cannot be ruled out. FSR4 might possess a regulatory function in the biosynthesis of fusarubins. This is Trans-enoyl reductase fsr4 from Gibberella fujikuroi (strain CBS 195.34 / IMI 58289 / NRRL A-6831) (Bakanae and foot rot disease fungus).